The primary structure comprises 368 residues: UPF0284 protein PCC8801_3324 (368 aa).

The protein belongs to the UPF0284 family.

The polypeptide is UPF0284 protein PCC8801_3324 (Rippkaea orientalis (strain PCC 8801 / RF-1) (Cyanothece sp. (strain PCC 8801))).